The primary structure comprises 212 residues: ATP phosphoribosyltransferase (212 aa).

It belongs to the ATP phosphoribosyltransferase family. Short subfamily. In terms of assembly, heteromultimer composed of HisG and HisZ subunits.

The protein resides in the cytoplasm. The catalysed reaction is 1-(5-phospho-beta-D-ribosyl)-ATP + diphosphate = 5-phospho-alpha-D-ribose 1-diphosphate + ATP. It participates in amino-acid biosynthesis; L-histidine biosynthesis; L-histidine from 5-phospho-alpha-D-ribose 1-diphosphate: step 1/9. In terms of biological role, catalyzes the condensation of ATP and 5-phosphoribose 1-diphosphate to form N'-(5'-phosphoribosyl)-ATP (PR-ATP). Has a crucial role in the pathway because the rate of histidine biosynthesis seems to be controlled primarily by regulation of HisG enzymatic activity. This chain is ATP phosphoribosyltransferase, found in Clostridium botulinum (strain ATCC 19397 / Type A).